Reading from the N-terminus, the 346-residue chain is Ephrin-B1 (346 aa).

An N-terminal signal peptide occupies residues 1–27 (MARPGQRWLGKWLVAMVVWALCRLATP). Topologically, residues 28 to 237 (LAKNLEPVSW…GDPDGFFNSK (210 aa)) are extracellular. Residues 30–164 (KNLEPVSWSS…TRTMKIIMKV (135 aa)) form the Ephrin RBD domain. 2 disulfide bridges follow: C64–C101 and C89–C153. N-linked (GlcNAc...) asparagine glycosylation is present at N139. The segment at 169-228 (NAVTPEQLTTSRPSKEADNTVKMATQAPGSRGSLGDSDGKHETVNQEEKSGPGASGGSSG) is disordered. Residues 205-218 (SDGKHETVNQEEKS) are compositionally biased toward basic and acidic residues. A helical transmembrane segment spans residues 238-258 (VALFAAVGAGCVIFLLIIIFL). The Cytoplasmic segment spans residues 259-346 (TVLLLKLRKR…QSPANIYYKV (88 aa)). The short motif at 260–273 (VLLLKLRKRHRKHT) is the Nuclear localization signal element. The segment at 263–294 (LKLRKRHRKHTQQRAAALSLSTLASPKGGSGT) is interaction with ZHX2. Phosphoserine is present on residues S281 and S287. The PDZ-binding signature appears at 344 to 346 (YKV).

Belongs to the ephrin family. As to quaternary structure, interacts (via PDZ-binding motif) with GRIP1 and GRIP2 (via PDZ domain 6). Interacts with TLE1. The intracellular domain peptide interacts with ZHX2; the interaction enhances ZHX2 transcriptional repression activity. In terms of processing, inducible phosphorylation of tyrosine residues in the cytoplasmic domain. Proteolytically processed. The ectodomain is cleaved, probably by a metalloprotease, to produce a membrane-tethered C-terminal fragment. This fragment is then further processed by the gamma-secretase complex to yield a soluble intracellular domain peptide which can translocate to the nucleus. The intracellular domain peptide is highly labile suggesting that it is targeted for degradation by the proteasome. As to expression, widely expressed. Detected in both neuronal and non-neuronal tissues. Seems to have particularly strong expression in retina, sciatic nerve, heart and spinal cord.

It localises to the cell membrane. The protein resides in the membrane raft. Its subcellular location is the nucleus. Cell surface transmembrane ligand for Eph receptors, a family of receptor tyrosine kinases which are crucial for migration, repulsion and adhesion during neuronal, vascular and epithelial development. Binding to Eph receptors residing on adjacent cells leads to contact-dependent bidirectional signaling into neighboring cells. Shows high affinity for the receptor tyrosine kinase EPHB1/ELK. Can also bind EPHB2 and EPHB3. Binds to, and induces collapse of, commissural axons/growth cones in vitro. May play a role in constraining the orientation of longitudinally projecting axons. This is Ephrin-B1 (EFNB1) from Homo sapiens (Human).